Consider the following 428-residue polypeptide: 3-phosphoshikimate 1-carboxyvinyltransferase (428 aa).

3-phosphoshikimate-binding residues include K19, S20, and R24. Position 19 (K19) interacts with phosphoenolpyruvate. The phosphoenolpyruvate site is built by G91 and R119. 3-phosphoshikimate contacts are provided by S164, Q166, D312, and K339. Position 166 (Q166) interacts with phosphoenolpyruvate. D312 serves as the catalytic Proton acceptor. 2 residues coordinate phosphoenolpyruvate: R343 and R386.

The protein belongs to the EPSP synthase family. Monomer.

It localises to the cytoplasm. It carries out the reaction 3-phosphoshikimate + phosphoenolpyruvate = 5-O-(1-carboxyvinyl)-3-phosphoshikimate + phosphate. Its pathway is metabolic intermediate biosynthesis; chorismate biosynthesis; chorismate from D-erythrose 4-phosphate and phosphoenolpyruvate: step 6/7. Its function is as follows. Catalyzes the transfer of the enolpyruvyl moiety of phosphoenolpyruvate (PEP) to the 5-hydroxyl of shikimate-3-phosphate (S3P) to produce enolpyruvyl shikimate-3-phosphate and inorganic phosphate. The protein is 3-phosphoshikimate 1-carboxyvinyltransferase of Bacillus velezensis (strain DSM 23117 / BGSC 10A6 / LMG 26770 / FZB42) (Bacillus amyloliquefaciens subsp. plantarum).